A 238-amino-acid chain; its full sequence is Orotidine 5'-phosphate decarboxylase (238 aa).

Substrate is bound by residues aspartate 18, lysine 40, 67-76, threonine 122, arginine 183, glutamine 192, and arginine 213; that span reads DMKLLDIDNT. Lysine 69 functions as the Proton donor in the catalytic mechanism.

Belongs to the OMP decarboxylase family. Type 1 subfamily. In terms of assembly, homodimer.

The enzyme catalyses orotidine 5'-phosphate + H(+) = UMP + CO2. The protein operates within pyrimidine metabolism; UMP biosynthesis via de novo pathway; UMP from orotate: step 2/2. Functionally, catalyzes the decarboxylation of orotidine 5'-monophosphate (OMP) to uridine 5'-monophosphate (UMP). The chain is Orotidine 5'-phosphate decarboxylase from Brucella melitensis biotype 2 (strain ATCC 23457).